Consider the following 172-residue polypeptide: Probable chorismate pyruvate-lyase (172 aa).

The substrate site is built by Met37, Arg79, Leu117, and Glu158.

It belongs to the UbiC family.

Its subcellular location is the cytoplasm. It carries out the reaction chorismate = 4-hydroxybenzoate + pyruvate. It participates in cofactor biosynthesis; ubiquinone biosynthesis. Removes the pyruvyl group from chorismate, with concomitant aromatization of the ring, to provide 4-hydroxybenzoate (4HB) for the ubiquinone pathway. This Bartonella quintana (strain Toulouse) (Rochalimaea quintana) protein is Probable chorismate pyruvate-lyase.